The sequence spans 435 residues: Eukaryotic translation initiation factor 3 subunit E (435 aa).

The PCI domain occupies 219–392 (FFNHPKGRDL…GHVVMGTQPL (174 aa)).

The protein belongs to the eIF-3 subunit E family. In terms of assembly, component of the eukaryotic translation initiation factor 3 (eIF-3) complex. The eIF-3 complex interacts with pix. Interacts with mxt.

It localises to the cytoplasm. Its function is as follows. Component of the eukaryotic translation initiation factor 3 (eIF-3) complex, which is involved in protein synthesis of a specialized repertoire of mRNAs and, together with other initiation factors, stimulates binding of mRNA and methionyl-tRNAi to the 40S ribosome. The eIF-3 complex specifically targets and initiates translation of a subset of mRNAs involved in cell proliferation. This is Eukaryotic translation initiation factor 3 subunit E (eIF3-S6) from Drosophila erecta (Fruit fly).